We begin with the raw amino-acid sequence, 216 residues long: Cytidylate kinase (216 aa).

Residue Gly7 to Thr15 coordinates ATP.

This sequence belongs to the cytidylate kinase family. Type 1 subfamily.

Its subcellular location is the cytoplasm. It catalyses the reaction CMP + ATP = CDP + ADP. It carries out the reaction dCMP + ATP = dCDP + ADP. The sequence is that of Cytidylate kinase from Chlamydia felis (strain Fe/C-56) (Chlamydophila felis).